A 675-amino-acid chain; its full sequence is TOM1-like protein 9 (675 aa).

The VHS domain occupies 9 to 138 (ATSEMLIGPD…ELLRAGAVFP (130 aa)). Disordered stretches follow at residues 144–181 (SAPV…EPEF), 270–322 (LPGT…QLAL), 371–524 (FSDN…YAQM), 542–561 (QNGV…GYQP), and 622–675 (RDQT…AGTM). The 89-residue stretch at 180–268 (EFPTLSLSEI…VLTNYEAIAS (89 aa)) folds into the GAT domain. Polar residues-rich tracts occupy residues 299–317 (GDSS…NGVL) and 372–435 (SDNT…GQGV). The span at 436 to 451 (SSPWSSQPAQQPVQPS) shows a compositional bias: low complexity. Composition is skewed to polar residues over residues 470-481 (QDYSPSAESGSP) and 488-524 (PTQT…YAQM). The segment covering 646–661 (NKPEDKLFGDLVDISK) has biased composition (basic and acidic residues).

It belongs to the TOM1 family. As to quaternary structure, interacts with ELC/VPS23A and ELCL/VPS23B. As to expression, ubiquitously expressed.

The protein localises to the cytoplasm. It is found in the membrane. Its function is as follows. Might contribute to the loading of the ESCRT machinery. The polypeptide is TOM1-like protein 9 (Arabidopsis thaliana (Mouse-ear cress)).